The primary structure comprises 184 residues: MSGKLTIITGPMYSGKTTELLSFVEIYKLGKKKVAVFKPKIDSRYHSTMIVSHSGNGVEAHVIERPEEIRKYIEEDTRGVFIDEVQFFSPGLFEVVKDLLDRGIDVFCAGLDLTHKQNPFETTALLLSLADTVIKKKAVCHRCGEYNATLTLKVAGGEEEIDVGGQEKYIAVCRDCYNTLKKRV.

ATP contacts are provided by residues 10 to 17 (GPMYSGKT) and 83 to 86 (DEVQ). Glutamate 84 acts as the Proton acceptor in catalysis. Zn(2+) is bound by residues cysteine 140, cysteine 143, cysteine 173, and cysteine 176.

The protein belongs to the thymidine kinase family. In terms of assembly, homotetramer.

It is found in the cytoplasm. The enzyme catalyses thymidine + ATP = dTMP + ADP + H(+). The sequence is that of Thymidine kinase from Thermotoga petrophila (strain ATCC BAA-488 / DSM 13995 / JCM 10881 / RKU-1).